Reading from the N-terminus, the 754-residue chain is MAFSSCLKFYPFSISQAVTLTHHSFSLNLTPPSSTISFASPHSAALSSTDVKLLDSLRSQPDDSAALRLFNLASKKPNFSPEPALYEEILLRLGRSGSFDDMKKILEDMKSSRCEMGTSTFLILIESYAQFELQDEILSVVDWMIDEFGLKPDTHFYNRMLNLLVDGNSLKLVEISHAKMSVWGIKPDVSTFNVLIKALCRAHQLRPAILMLEDMPSYGLVPDEKTFTTVMQGYIEEGDLDGALRIREQMVEFGCSWSNVSVNVIVHGFCKEGRVEDALNFIQEMSNQDGFFPDQYTFNTLVNGLCKAGHVKHAIEIMDVMLQEGYDPDVYTYNSVISGLCKLGEVKEAVEVLDQMITRDCSPNTVTYNTLISTLCKENQVEEATELARVLTSKGILPDVCTFNSLIQGLCLTRNHRVAMELFEEMRSKGCEPDEFTYNMLIDSLCSKGKLDEALNMLKQMELSGCARSVITYNTLIDGFCKANKTREAEEIFDEMEVHGVSRNSVTYNTLIDGLCKSRRVEDAAQLMDQMIMEGQKPDKYTYNSLLTHFCRGGDIKKAADIVQAMTSNGCEPDIVTYGTLISGLCKAGRVEVASKLLRSIQMKGINLTPHAYNPVIQGLFRKRKTTEAINLFREMLEQNEAPPDAVSYRIVFRGLCNGGGPIREAVDFLVELLEKGFVPEFSSLYMLAEGLLTLSMEETLVKLVNMVMQKARFSEEEVSMVKGLLKIRKFQDALATLGGVLDSRQPRRTYRSR.

Residues 1–72 constitute a chloroplast transit peptide; sequence MAFSSCLKFY…DSAALRLFNL (72 aa). 17 PPR repeats span residues 82 to 116, 117 to 152, 153 to 187, 188 to 222, 223 to 257, 258 to 288, 294 to 328, 329 to 363, 364 to 398, 399 to 433, 434 to 468, 469 to 503, 504 to 538, 539 to 573, 574 to 608, 609 to 643, and 645 to 680; these read EPAL…RCEM, GTST…GLKP, DTHF…GIKP, DVST…GLVP, DEKT…GCSW, SNVS…MSNQ, DQYT…GYDP, DVYT…DCSP, NTVT…GILP, DVCT…GCEP, DEFT…GCAR, SVIT…GVSR, NSVT…GQKP, DKYT…GCEP, DIVT…GINL, TPHA…NEAP, and DAVS…GFVP.

Belongs to the PPR family. P subfamily.

It localises to the plastid. The protein localises to the chloroplast. In terms of biological role, may be involved in female gametophyte development. The polypeptide is Pentatricopeptide repeat-containing protein At3g53700, chloroplastic (MEE40) (Arabidopsis thaliana (Mouse-ear cress)).